The primary structure comprises 981 residues: Helicase-like transcription factor CHR28 (981 aa).

Disordered regions lie at residues 1–66 and 112–194; these read MDSA…LDSR and KRTH…RNSE. The span at 46 to 65 shows a compositional bias: polar residues; it reads SGSSSGANGHTKTGLTNLDS. A compositionally biased stretch (pro residues) spans 119–128; sequence FSRPPFPPRP. Over residues 166-176 the composition is skewed to polar residues; that stretch reads HGTSASPSHFN. Positions 181–194 are enriched in basic and acidic residues; it reads PMHRNGIGEERNSE. Residues 241–526 enclose the Helicase ATP-binding domain; it reads ETNSLHCMGG…YSYFRFLKYD (286 aa). 254–261 contacts ATP; the sequence is DDQGLGKT. Disordered stretches follow at residues 293–337 and 439–462; these read DADD…RKFN and VVGTTKKSKKKKGNNNAGDSSDPD. The segment covering 439–451 has biased composition (basic residues); the sequence is VVGTTKKSKKKKG. Residues 679–718 form an RING-type; degenerate zinc finger; sequence CCVCHDPPEDPVVTLCGHIFCYQCVSDYITGDEDTCPAPR. Residues 779-798 show a composition bias toward polar residues; sequence NQGTSNSTQNGQMASSSQQP. The disordered stretch occupies residues 779–808; that stretch reads NQGTSNSTQNGQMASSSQQPNDDDDDDDDD. Residues 799–808 show a composition bias toward acidic residues; the sequence is NDDDDDDDDD. The Helicase C-terminal domain occupies 804 to 976; that stretch reads DDDDDVTIVE…ATRLTVDDLK (173 aa).

Belongs to the SNF2/RAD54 helicase family. RAD16 subfamily. As to quaternary structure, interacts with SUVR2.

The protein localises to the nucleus. Functionally, probable helicase-like transcription factor involved in transcriptional gene silencing. Associates with SUVR2 and contributes to transcriptional gene silencing at RNA-directed DNA methylation (RdDM) target loci but also at RdDM-independent target loci. May be involved in nucleosome positioning to form ordered nucleosome arrays on chromatin. Associates with SUVR2 and functions redundantly with FRG1. Required for the efficient methylation of a broad range of RdDM target loci. This is Helicase-like transcription factor CHR28 from Arabidopsis thaliana (Mouse-ear cress).